The following is a 269-amino-acid chain: GTP cyclohydrolase FolE2 (269 aa).

It belongs to the GTP cyclohydrolase IV family.

The catalysed reaction is GTP + H2O = 7,8-dihydroneopterin 3'-triphosphate + formate + H(+). It participates in cofactor biosynthesis; 7,8-dihydroneopterin triphosphate biosynthesis; 7,8-dihydroneopterin triphosphate from GTP: step 1/1. In terms of biological role, converts GTP to 7,8-dihydroneopterin triphosphate. This is GTP cyclohydrolase FolE2 from Burkholderia ambifaria (strain MC40-6).